The chain runs to 875 residues: Alanine--tRNA ligase (875 aa).

Residues histidine 563, histidine 567, cysteine 665, and histidine 669 each contribute to the Zn(2+) site.

It belongs to the class-II aminoacyl-tRNA synthetase family. Zn(2+) is required as a cofactor.

The protein localises to the cytoplasm. The catalysed reaction is tRNA(Ala) + L-alanine + ATP = L-alanyl-tRNA(Ala) + AMP + diphosphate. Functionally, catalyzes the attachment of alanine to tRNA(Ala) in a two-step reaction: alanine is first activated by ATP to form Ala-AMP and then transferred to the acceptor end of tRNA(Ala). Also edits incorrectly charged Ser-tRNA(Ala) and Gly-tRNA(Ala) via its editing domain. The protein is Alanine--tRNA ligase of Shewanella pealeana (strain ATCC 700345 / ANG-SQ1).